A 905-amino-acid chain; its full sequence is Protein translocase subunit SecA (905 aa).

ATP contacts are provided by residues Q87, G105 to T109, and D512. A disordered region spans residues A840–A905. The segment covering Q843 to S852 has biased composition (low complexity). Positions E853–A862 are enriched in basic and acidic residues. The span at E863–Q874 shows a compositional bias: polar residues. Residues C886, C888, C897, and H898 each coordinate Zn(2+). Basic residues predominate over residues K892–A905.

This sequence belongs to the SecA family. Monomer and homodimer. Part of the essential Sec protein translocation apparatus which comprises SecA, SecYEG and auxiliary proteins SecDF-YajC and YidC. Zn(2+) serves as cofactor.

Its subcellular location is the cell inner membrane. The protein localises to the cytoplasm. The enzyme catalyses ATP + H2O + cellular proteinSide 1 = ADP + phosphate + cellular proteinSide 2.. Part of the Sec protein translocase complex. Interacts with the SecYEG preprotein conducting channel. Has a central role in coupling the hydrolysis of ATP to the transfer of proteins into and across the cell membrane, serving both as a receptor for the preprotein-SecB complex and as an ATP-driven molecular motor driving the stepwise translocation of polypeptide chains across the membrane. The polypeptide is Protein translocase subunit SecA (Actinobacillus pleuropneumoniae serotype 3 (strain JL03)).